Consider the following 576-residue polypeptide: Kinetochore-associated protein DSN1 (576 aa).

Positions 1 to 11 (MSLEPTQTVSG) are enriched in polar residues. 4 disordered regions span residues 1–22 (MSLE…RTHK), 35–64 (LESD…NKQS), 185–205 (YSQP…ISSS), and 227–246 (QPHY…SQRG). Residues 235 to 246 (RERKKSIGSQRG) show a composition bias toward basic residues. S250 is subject to Phosphoserine. Residues 412-437 (RSRRKFSERRKALPKEPKKLLPNSKN) form a disordered region. Positions 420–430 (RRKALPKEPKK) are enriched in basic and acidic residues.

Component of the MIND kinetochore complex, which is composed of at least MTW1, NNF1, NSL1 and DSN1. Interacts with NSL1.

The protein resides in the nucleus. The protein localises to the chromosome. It localises to the centromere. Its subcellular location is the kinetochore. In terms of biological role, acts as an essential component of the kinetochore MIND complex, which is required for the spindle checkpoint and kinetochore integrity. MIND plays a role in establishing a bipolar spindle-kinetochore interaction by joining kinetochore subunits contacting DNA to those contacting microtubules. This is Kinetochore-associated protein DSN1 (DSN1) from Saccharomyces cerevisiae (strain ATCC 204508 / S288c) (Baker's yeast).